The chain runs to 627 residues: Protein fem-1 homolog B (627 aa).

ANK repeat units follow at residues 45 to 74 (QRSTPLIIAARNGHAKVVRLLLEHYRVQTQ), 87 to 116 (DGATALWCAAGAGHFEVVKLLVSHGANVNH), 120 to 149 (TNSTPLRAACFDGRLDIVKYLVENNANISI), and 153 to 182 (YDNTCLMIAAYKGHTDVVRYLLEQRADPNA). Zn(2+) is bound by residues H185, C186, and H218. 2 ANK repeats span residues 186–215 (CGATALHFAAEAGHIDIVKELIKWRAAIVV) and 218–248 (HGMTPLKVAAESCKADVVELLLSHADCDRRS). The TPR repeat unit spans residues 344 to 377 (SHPIIYRGAVYADNMEFEQCIKLWLHALHLRQKG). 2 ANK repeats span residues 483–527 (EGFT…EVNA) and 531–568 (EGNSALHIIVQYNRPISDFLTLHSIIISLVEAGAHTDM).

It belongs to the fem-1 family. As to quaternary structure, component of a CRL2 E3 ubiquitin-protein ligase complex, also named ECS (Elongin BC-CUL2/5-SOCS-box protein) complex, composed of CUL2, Elongin BC (ELOB and ELOC), RBX1 and substrate-specific adapter FEM1B. Homooligomer. Interacts with PPM1F and PHTF1. Interacts with the death domain of FAS/TNFRSF6 and TNFRSF1A. Interacts with CHEK1. Interacts with NKX3-1. Widely expressed. Highly expressed in testis. Weakly expressed in other tissues.

It is found in the cytoplasm. It localises to the nucleus. The protein operates within protein modification; protein ubiquitination. Its activity is regulated as follows. Activity of the CRL2(FEM1B) complex toward FNIP1 is inhibited by BEX family proteins (BEX1, BEX2, BEX3, BEX4 and/or BEX5) in absence of reductive stress. Mechanistically, BEX proteins act as pseudosubstrate inhibitors that associate with FEM1B via zinc in absence of reductive stress, thereby preventing association between FEM1B and FNIP1. Its function is as follows. Substrate-recognition component of a Cul2-RING (CRL2) E3 ubiquitin-protein ligase complex of the DesCEND (destruction via C-end degrons) pathway, which recognizes a C-degron located at the extreme C terminus of target proteins, leading to their ubiquitination and degradation. The C-degron recognized by the DesCEND pathway is usually a motif of less than ten residues and can be present in full-length proteins, truncated proteins or proteolytically cleaved forms. The CRL2(FEM1B) complex specifically recognizes proteins ending with -Gly-Leu-Asp-Arg, such as CDK5R1, leading to their ubiquitination and degradation. Also acts as a regulator of the reductive stress response by mediating ubiquitination of reduced FNIP1: in response to reductive stress, the CRL2(FEM1B) complex specifically recognizes a conserved Cys degron in FNIP1 when this degron is reduced, leading to FNIP1 degradation and subsequent activation of mitochondria to recalibrate reactive oxygen species (ROS). Mechanistically, recognizes and binds reduced FNIP1 through two interface zinc ions, which act as a molecular glue that recruit reduced FNIP1 to FEM1B. Promotes ubiquitination of GLI1, suppressing GLI1 transcriptional activator activity. Promotes ubiquitination and degradation of ANKRD37. Promotes ubiquitination and degradation of SLBP. Involved in apoptosis by acting as a death receptor-associated protein that mediates apoptosis. Also involved in glucose homeostasis in pancreatic islet. May also act as an adapter/mediator in replication stress-induced signaling that leads to the activation of CHEK1. This Homo sapiens (Human) protein is Protein fem-1 homolog B.